The primary structure comprises 858 residues: Heat shock protein 105 kDa (858 aa).

An N-acetylserine modification is found at S2. The residue at position 471 (K471) is an N6-acetyllysine. Disordered stretches follow at residues 500 to 585 and 801 to 858; these read KVPT…PPEA and VTQP…MDLD. Residues 504 to 515 are compositionally biased toward acidic residues; it reads EEEDGSSVEADM. Phosphoserine occurs at positions 509 and 510. Polar residues predominate over residues 533-555; it reads QQDNSEAGTQPQVQTDGQQTSQS. Phosphoserine is present on S558. The residue at position 562 (T562) is a Phosphothreonine. Composition is skewed to basic and acidic residues over residues 564–585 and 806–815; these read EENK…PPEA and PKIESPKLER. S810 is subject to Phosphoserine. T816 is modified (phosphothreonine).

It belongs to the heat shock protein 70 family. Interacts with HSPA8/HSC70. Interacts with HSPA1A (via NBD) and HSPA1B (via NBD). In terms of processing, phosphorylation on Ser-509 may be important for regulation of the HSPA8/HSC70 chaperone activity.

It localises to the cytoplasm. Acts as a nucleotide-exchange factor (NEF) for chaperone proteins HSPA1A and HSPA1B, promoting the release of ADP from HSPA1A/B thereby triggering substrate release. Prevents the aggregation of denatured proteins in cells under severe stress, on which the ATP levels decrease markedly. Inhibits HSPA8/HSC70 ATPase and chaperone activities. This chain is Heat shock protein 105 kDa (Hsph1), found in Rattus norvegicus (Rat).